The sequence spans 473 residues: Aspartyl/glutamyl-tRNA(Asn/Gln) amidotransferase subunit B (473 aa).

It belongs to the GatB/GatE family. GatB subfamily. As to quaternary structure, heterotrimer of A, B and C subunits.

It catalyses the reaction L-glutamyl-tRNA(Gln) + L-glutamine + ATP + H2O = L-glutaminyl-tRNA(Gln) + L-glutamate + ADP + phosphate + H(+). The enzyme catalyses L-aspartyl-tRNA(Asn) + L-glutamine + ATP + H2O = L-asparaginyl-tRNA(Asn) + L-glutamate + ADP + phosphate + 2 H(+). Its function is as follows. Allows the formation of correctly charged Asn-tRNA(Asn) or Gln-tRNA(Gln) through the transamidation of misacylated Asp-tRNA(Asn) or Glu-tRNA(Gln) in organisms which lack either or both of asparaginyl-tRNA or glutaminyl-tRNA synthetases. The reaction takes place in the presence of glutamine and ATP through an activated phospho-Asp-tRNA(Asn) or phospho-Glu-tRNA(Gln). The polypeptide is Aspartyl/glutamyl-tRNA(Asn/Gln) amidotransferase subunit B (Wolbachia pipientis subsp. Culex pipiens (strain wPip)).